The chain runs to 693 residues: UvrABC system protein B (693 aa).

Residues E35 to I188 enclose the Helicase ATP-binding domain. G48–S55 provides a ligand contact to ATP. Residues Y101–V124 carry the Beta-hairpin motif. Residues Q438–I600 form the Helicase C-terminal domain. Residues A612 to V634 are disordered. The region spanning V648–E683 is the UVR domain.

It belongs to the UvrB family. Forms a heterotetramer with UvrA during the search for lesions. Interacts with UvrC in an incision complex.

The protein localises to the cytoplasm. Functionally, the UvrABC repair system catalyzes the recognition and processing of DNA lesions. A damage recognition complex composed of 2 UvrA and 2 UvrB subunits scans DNA for abnormalities. Upon binding of the UvrA(2)B(2) complex to a putative damaged site, the DNA wraps around one UvrB monomer. DNA wrap is dependent on ATP binding by UvrB and probably causes local melting of the DNA helix, facilitating insertion of UvrB beta-hairpin between the DNA strands. Then UvrB probes one DNA strand for the presence of a lesion. If a lesion is found the UvrA subunits dissociate and the UvrB-DNA preincision complex is formed. This complex is subsequently bound by UvrC and the second UvrB is released. If no lesion is found, the DNA wraps around the other UvrB subunit that will check the other stand for damage. The sequence is that of UvrABC system protein B from Renibacterium salmoninarum (strain ATCC 33209 / DSM 20767 / JCM 11484 / NBRC 15589 / NCIMB 2235).